We begin with the raw amino-acid sequence, 370 residues long: Cyclic dehypoxanthine futalosine synthase (370 aa).

Positions 50–295 (TTFVIGRNVN…QSSWVTMGPE (246 aa)) constitute a Radical SAM core domain. [4Fe-4S] cluster contacts are provided by Cys64, Cys68, and Cys71.

Belongs to the radical SAM superfamily. MqnC family. [4Fe-4S] cluster is required as a cofactor.

It carries out the reaction dehypoxanthine futalosine + S-adenosyl-L-methionine = cyclic dehypoxanthinylfutalosinate + 5'-deoxyadenosine + L-methionine + H(+). Its pathway is quinol/quinone metabolism; menaquinone biosynthesis. In terms of biological role, radical SAM enzyme that catalyzes the cyclization of dehypoxanthine futalosine (DHFL) into cyclic dehypoxanthine futalosine (CDHFL), a step in the biosynthesis of menaquinone (MK, vitamin K2). The protein is Cyclic dehypoxanthine futalosine synthase of Halalkalibacterium halodurans (strain ATCC BAA-125 / DSM 18197 / FERM 7344 / JCM 9153 / C-125) (Bacillus halodurans).